The chain runs to 332 residues: Aquaporin-7-1 (332 aa).

Residues 1–66 are Cytoplasmic-facing; that stretch reads MSGQHQITEQ…RHAIRMPMAE (66 aa). A helical transmembrane segment spans residues 67-87; sequence FFGVALLIIFGAGSACQVVLS. Residues 88-100 lie on the Extracellular side of the membrane; the sequence is TNPNVASSDRGSF. The chain crosses the membrane as a helical span at residues 101 to 121; the sequence is LSINLGWAIGIAMGAWVSGGI. Topologically, residues 122-144 are cytoplasmic; the sequence is SGGHINPAITIAMATYRGFPWRR. The short motif at 127–129 is the NPA 1 element; the sequence is NPA. The chain crosses the membrane as a helical span at residues 145–165; it reads VPSYIFAQVLGGVVGAALVYA. Residues 166 to 199 are Extracellular-facing; sequence NYIHAIDIFEGGRHVRTQATASLFATYALPYMTQ. The chain crosses the membrane as a helical span at residues 200-220; it reads VSCFFSEFLATAVLSMMVLAL. Over 221–230 the chain is Cytoplasmic; that stretch reads TDNRNGAPTN. The chain crosses the membrane as a helical span at residues 231 to 251; sequence GLLPFALFVLFIGLGASLGME. Over 252 to 283 the chain is Extracellular; it reads TAYALNPARDFGPRLFLAMSGYGKALFNYRSQ. An NPA 2 motif is present at residues 257–259; sequence NPA. A helical membrane pass occupies residues 284 to 304; sequence YWLWAPIIAPVLGAQAGGLLY. Residues 305 to 332 lie on the Cytoplasmic side of the membrane; the sequence is DTFLYDGDNSPIKWRRASSQECQLAEVV.

Belongs to the MIP/aquaporin (TC 1.A.8) family.

The protein resides in the membrane. It carries out the reaction H2O(in) = H2O(out). Functionally, water channel required to facilitate the transport of water across membranes. Does not mediate the transport carbon dioxide across the membrane. This chain is Aquaporin-7-1, found in Laccaria bicolor (Bicoloured deceiver).